The chain runs to 274 residues: Mitochondrial S-adenosylmethionine carrier protein (274 aa).

3 Solcar repeats span residues 4-77 (PGFV…VKWF), 86-168 (LTPM…LKAL), and 177-265 (VDSW…THSL). Helical transmembrane passes span 5–25 (GFVA…LILF), 49–69 (IYAG…AFFI), 85–105 (YLTP…ACLI), 142–162 (RGYK…FPLW), 182–202 (SAVC…PLDV), and 238–258 (FAGV…FLGA).

It belongs to the mitochondrial carrier (TC 2.A.29) family. In terms of tissue distribution, widely expressed. Highly expressed in testis, with moderate expression in brain, heart, kidney, lung, skeletal muscle, pancreas, small intestine and liver, and low expression in spleen.

It is found in the mitochondrion inner membrane. It catalyses the reaction S-adenosyl-L-homocysteine(out) + S-adenosyl-L-methionine(in) = S-adenosyl-L-homocysteine(in) + S-adenosyl-L-methionine(out). With respect to regulation, strongly inhibited by tannic acid and Bromocresol Purple. Mitochondrial S-adenosyl-L-methionine/S-adenosyl-L-homocysteine antiporter. Mediates the exchange of cytosolic S-adenosyl-L-methionine, the predominant methyl-group donor for macromolecule methylation processes, for mitochondrial S-adenosylhomocysteine(SAH), a by-product of methylation reactions. This chain is Mitochondrial S-adenosylmethionine carrier protein, found in Homo sapiens (Human).